Here is a 66-residue protein sequence, read N- to C-terminus: Toxin Boma6e (66 aa).

Residues 2 to 64 (RDAYIAQNYN…VPLKVQGKCH (63 aa)) enclose the LCN-type CS-alpha/beta domain. 3 cysteine pairs are disulfide-bonded: Cys12–Cys63, Cys22–Cys46, and Cys26–Cys48.

The protein belongs to the long (3 C-C) scorpion toxin superfamily. In terms of processing, only three disulfide bridges can be formed, because only seven cysteines are present. Expressed by the venom gland.

It is found in the secreted. Binds voltage-independently at site-3 of sodium channels (Nav) and inhibits the inactivation of the activated channels, thereby blocking neuronal transmission. This chain is Toxin Boma6e, found in Buthus occitanus mardochei (Moroccan scorpion).